Reading from the N-terminus, the 2193-residue chain is Genome polyprotein (2193 aa).

The N-myristoyl glycine; by host moiety is linked to residue Gly2. Residues 2 to 1503 (GAQVSTQKTG…HVSRAFICLQ (1502 aa)) are Cytoplasmic-facing. The segment at 567–583 (ELQSDVREAVEGAIGRV) is amphipathic alpha-helix. Catalysis depends on for protease 2A activity residues His880 and Asp898. Residues Cys915 and Cys917 each coordinate Zn(2+). Catalysis depends on Cys969, which acts as the For protease 2A activity. Cys975 and His977 together coordinate Zn(2+). A membrane-binding region spans residues 1109–1181 (NNRWLKKFTE…EQSAPSQGDQ (73 aa)). The oligomerization stretch occupies residues 1109–1247 (NNRWLKKFTE…SPGAGKSVAT (139 aa)). Residues 1130–1134 (AIKIQ) are RNA-binding. The SF3 helicase domain maps to 1213 to 1369 (EKKMSNYIQF…SMYSQNGKIN (157 aa)). Zn(2+) is bound by residues Cys1377, Cys1389, and Cys1394. A C4-type; degenerate zinc finger spans residues 1377–1394 (CDEECCPVNFKKCCPLVC). Residues 1421 to 1428 (EYNHRHSV) are RNA-binding. The tract at residues 1432–1437 (LEALFQ) is oligomerization. The stretch at 1504 to 1519 (ALTTFVSVAGIIYIIY) is an intramembrane region. Residues 1520 to 2193 (KLFAGFQGAY…TLRRKWLDSF (674 aa)) lie on the Cytoplasmic side of the membrane. The residue at position 1529 (Tyr1529) is an O-(5'-phospho-RNA)-tyrosine. In terms of domain architecture, Peptidase C3 spans 1549 to 1727 (GPAFEFAVAM…FSAALLKHYF (179 aa)). Catalysis depends on for protease 3C activity residues His1588, Glu1619, and Cys1695. The region spanning 1958–2074 (GHLIAFDYSG…SYPWPIDASL (117 aa)) is the RdRp catalytic domain. Asp1964 and Asp2060 together coordinate Mg(2+).

The protein belongs to the picornaviruses polyprotein family. Interacts with capsid protein VP1 and capsid protein VP3 to form heterotrimeric protomers. In terms of assembly, interacts with capsid protein VP0, and capsid protein VP3 to form heterotrimeric protomers. Five protomers subsequently associate to form pentamers which serve as building blocks for the capsid. Interacts with capsid protein VP2, capsid protein VP3 and capsid protein VP4 following cleavage of capsid protein VP0. As to quaternary structure, interacts with capsid protein VP1 and capsid protein VP3 in the mature capsid. Interacts with capsid protein VP0 and capsid protein VP1 to form heterotrimeric protomers. Five protomers subsequently associate to form pentamers which serve as building blocks for the capsid. Interacts with capsid protein VP4 in the mature capsid. Interacts with protein 2C; this interaction may be important for virion morphogenesis. In terms of assembly, interacts with capsid protein VP1 and capsid protein VP3. As to quaternary structure, homodimer. Homohexamer; forms a hexameric ring structure with 6-fold symmetry characteristic of AAA+ ATPases. Interacts (via N-terminus) with host RTN3 (via reticulon domain); this interaction is important for viral replication. Interacts with capsid protein VP3; this interaction may be important for virion morphogenesis. In terms of assembly, interacts with protein 3CD. As to quaternary structure, homodimer. Interacts with host GBF1. Interacts (via GOLD domain) with host ACBD3 (via GOLD domain); this interaction allows the formation of a viral protein 3A/ACBD3 heterotetramer with a 2:2 stoichiometry, which will stimulate the recruitment of host PI4KB in order to synthesize PI4P at the viral RNA replication sites. Interacts with RNA-directed RNA polymerase. In terms of assembly, interacts with protein 3AB and with RNA-directed RNA polymerase. As to quaternary structure, interacts with Viral protein genome-linked and with protein 3CD. Mg(2+) serves as cofactor. Post-translationally, specific enzymatic cleavages in vivo by the viral proteases yield processing intermediates and the mature proteins. In terms of processing, myristoylation is required for the formation of pentamers during virus assembly. Further assembly of 12 pentamers and a molecule of genomic RNA generates the provirion. During virion maturation, immature virions are rendered infectious following cleavage of VP0 into VP4 and VP2. This maturation seems to be an autocatalytic event triggered by the presence of RNA in the capsid and it is followed by a conformational change infectious virion. Post-translationally, myristoylation is required during RNA encapsidation and formation of the mature virus particle. In terms of processing, VPg is uridylylated by the polymerase into VPg-pUpU. This acts as a nucleotide-peptide primer for the genomic RNA replication.

It localises to the virion. The protein resides in the host cytoplasm. The protein localises to the host cytoplasmic vesicle membrane. It is found in the host nucleus. It catalyses the reaction a ribonucleoside 5'-triphosphate + H2O = a ribonucleoside 5'-diphosphate + phosphate + H(+). The catalysed reaction is Selective cleavage of Tyr-|-Gly bond in the picornavirus polyprotein.. It carries out the reaction RNA(n) + a ribonucleoside 5'-triphosphate = RNA(n+1) + diphosphate. The enzyme catalyses Selective cleavage of Gln-|-Gly bond in the poliovirus polyprotein. In other picornavirus reactions Glu may be substituted for Gln, and Ser or Thr for Gly.. Replication or transcription is subject to high level of random mutations by the nucleotide analog ribavirin. Functionally, forms an icosahedral capsid of pseudo T=3 symmetry with capsid proteins VP2 and VP3. The capsid is 300 Angstroms in diameter, composed of 60 copies of each capsid protein and enclosing the viral positive strand RNA genome. Capsid protein VP1 mainly forms the vertices of the capsid. Capsid protein VP1 interacts with host cell receptor to provide virion attachment to target host cells. This attachment induces virion internalization. Tyrosine kinases are probably involved in the entry process. After binding to its receptor, the capsid undergoes conformational changes. Capsid protein VP1 N-terminus (that contains an amphipathic alpha-helix) and capsid protein VP4 are externalized. Together, they shape a pore in the host membrane through which viral genome is translocated to host cell cytoplasm. Forms an icosahedral capsid of pseudo T=3 symmetry with capsid proteins VP2 and VP3. The capsid is 300 Angstroms in diameter, composed of 60 copies of each capsid protein and enclosing the viral positive strand RNA genome. Its function is as follows. Lies on the inner surface of the capsid shell. After binding to the host receptor, the capsid undergoes conformational changes. Capsid protein VP4 is released, Capsid protein VP1 N-terminus is externalized, and together, they shape a pore in the host membrane through which the viral genome is translocated into the host cell cytoplasm. In terms of biological role, component of immature procapsids, which is cleaved into capsid proteins VP4 and VP2 after maturation. Allows the capsid to remain inactive before the maturation step. Functionally, cysteine protease that cleaves viral polyprotein and specific host proteins. It is responsible for the autocatalytic cleavage between the P1 and P2 regions, which is the first cleavage occurring in the polyprotein. Also cleaves the host translation initiation factor EIF4G1, in order to shut down the capped cellular mRNA translation. Inhibits the host nucleus-cytoplasm protein and RNA trafficking by cleaving host members of the nuclear pores. Counteracts stress granule formation probably by antagonizing its assembly or promoting its dissassembly. Plays an essential role in the virus replication cycle by acting as a viroporin. Creates a pore in the host endoplasmic reticulum and as a consequence releases Ca2+ in the cytoplasm of infected cell. In turn, high levels of cytoplasmic calcium may trigger membrane trafficking and transport of viral ER-associated proteins to viroplasms, sites of viral genome replication. Its function is as follows. Induces and associates with structural rearrangements of intracellular membranes. Displays RNA-binding, nucleotide binding and NTPase activities. May play a role in virion morphogenesis and viral RNA encapsidation by interacting with the capsid protein VP3. In terms of biological role, localizes the viral replication complex to the surface of membranous vesicles. Together with protein 3CD binds the Cis-Active RNA Element (CRE) which is involved in RNA synthesis initiation. Acts as a cofactor to stimulate the activity of 3D polymerase, maybe through a nucleid acid chaperone activity. Functionally, localizes the viral replication complex to the surface of membranous vesicles. It inhibits host cell endoplasmic reticulum-to-Golgi apparatus transport and causes the disassembly of the Golgi complex, possibly through GBF1 interaction. This would result in depletion of MHC, trail receptors and IFN receptors at the host cell surface. Plays an essential role in viral RNA replication by recruiting ACBD3 and PI4KB at the viral replication sites, thereby allowing the formation of the rearranged membranous structures where viral replication takes place. Acts as a primer for viral RNA replication and remains covalently bound to viral genomic RNA. VPg is uridylylated prior to priming replication into VPg-pUpU. The oriI viral genomic sequence may act as a template for this. The VPg-pUpU is then used as primer on the genomic RNA poly(A) by the RNA-dependent RNA polymerase to replicate the viral genome. During genome replication, the VPg-RNA linkage is removed by the host TDP2, thereby accelerating replication. During the late stage of the replication cycle, host TDP2 is excluded from sites of viral RNA synthesis and encapsidation, allowing for the generation of progeny virions. Its function is as follows. Involved in the viral replication complex and viral polypeptide maturation. It exhibits protease activity with a specificity and catalytic efficiency that is different from protease 3C. Protein 3CD lacks polymerase activity. Protein 3CD binds to the 5'UTR of the viral genome. In terms of biological role, replicates the viral genomic RNA on the surface of intracellular membranes. May form linear arrays of subunits that propagate along a strong head-to-tail interaction called interface-I. Covalently attaches UMP to a tyrosine of VPg, which is used to prime RNA synthesis. The positive stranded RNA genome is first replicated at virus induced membranous vesicles, creating a dsRNA genomic replication form. This dsRNA is then used as template to synthesize positive stranded RNA genomes. ss(+)RNA genomes are either translated, replicated or encapsidated. Functionally, major viral protease that mediates proteolytic processing of the polyprotein. Cleaves host EIF5B, contributing to host translation shutoff. Also cleaves host PABPC1, contributing to host translation shutoff. Cleaves host NLRP1, triggers host N-glycine-mediated degradation of the autoinhibitory NLRP1 N-terminal fragment. This Echovirus 9 (strain Hill) protein is Genome polyprotein.